Here is a 178-residue protein sequence, read N- to C-terminus: Beta-lactoglobulin-1A/1C (178 aa).

The signal sequence occupies residues Met1 to Ala18. Cystine bridges form between Cys84/Cys176 and Cys124/Cys137.

This sequence belongs to the calycin superfamily. Lipocalin family. As to quaternary structure, under physiological conditions beta-lactoglobulin exists as an equilibrium mixture of monomeric and dimeric forms.

The protein localises to the secreted. In terms of biological role, lactoglobulin is the primary component of whey, it binds retinol and is probably involved in the transport of that molecule. The chain is Beta-lactoglobulin-1A/1C from Sus scrofa (Pig).